Here is a 330-residue protein sequence, read N- to C-terminus: Thiosulfate transporter TsuA (330 aa).

Topologically, residues 1–2 (MI) are periplasmic. A helical transmembrane segment spans residues 3 to 18 (WTGLLVGFLFGIVLQR). Residues 19–36 (GRICFNSAFRDVLLFKDN) lie on the Cytoplasmic side of the membrane. Residues 37 to 59 (YLFKLAVFTLALEMILFVLLSQV) form a helical membrane-spanning segment. Topologically, residues 60–70 (GLMQMNPKPLN) are periplasmic. A helical membrane pass occupies residues 71 to 87 (LVGNIIGGFVFGLGMVL). Residues 88-102 (AGGCASGVTYRVGEG) lie on the Cytoplasmic side of the membrane. The helical transmembrane segment at 103-121 (LTTAWFAALFYGLGAYATK) threads the bilayer. Residues 122–162 (SGAFSWWLSWVGQFKSPLSVEESAYYVKGAGPTISSVLGLN) are Periplasmic-facing. A helical transmembrane segment spans residues 163-180 (PWIPALVIAALFILWAFG). At 181-189 (TKTTSRETK) the chain is on the cytoplasmic side. The helical transmembrane segment at 190 to 211 (FNWKIASVCLALVAGLGFITST) threads the bilayer. Residues 212–239 (LSGRKYGLGITGGWINLFQGFLTNSPLN) are Periplasmic-facing. A helical membrane pass occupies residues 240–258 (WEGLEIVGIILGAGVAAAV). Residues 259-269 (AGEFKLRMPKN) are Cytoplasmic-facing. Residues 270 to 289 (PVTYLQVGIGGLLMGIGAVT) form a helical membrane-spanning segment. Over 290–306 (AGGCNIGHFLTGVPQLA) the chain is Periplasmic. A helical membrane pass occupies residues 307–326 (LSSWLASIFFILGNWTMAWI). The Cytoplasmic portion of the chain corresponds to 327–330 (LFRR).

Belongs to the TsuA/YedE (TC 9.B.102) family.

The protein localises to the cell inner membrane. It carries out the reaction thiosulfate(in) = thiosulfate(out). Functionally, mediates thiosulfate uptake. The sequence is that of Thiosulfate transporter TsuA from Spirochaeta thermophila (strain ATCC 700085 / DSM 6578 / Z-1203).